Here is a 61-residue protein sequence, read N- to C-terminus: Large ribosomal subunit protein eL24 (61 aa).

Residues Cys7, Cys10, Cys33, and Cys37 each contribute to the Zn(2+) site. Residues Cys7–Cys37 form a C4-type zinc finger.

Belongs to the eukaryotic ribosomal protein eL24 family. As to quaternary structure, part of the 50S ribosomal subunit. Forms a cluster with proteins L3 and L14. The cofactor is Zn(2+).

In terms of biological role, binds to the 23S rRNA. This chain is Large ribosomal subunit protein eL24, found in Hyperthermus butylicus (strain DSM 5456 / JCM 9403 / PLM1-5).